The following is a 140-amino-acid chain: Nucleoside diphosphate kinase (140 aa).

Residues K11, F59, R87, T93, R104, and N114 each contribute to the ATP site. H117 functions as the Pros-phosphohistidine intermediate in the catalytic mechanism.

Belongs to the NDK family. As to quaternary structure, homotetramer. Requires Mg(2+) as cofactor.

The protein resides in the cytoplasm. The catalysed reaction is a 2'-deoxyribonucleoside 5'-diphosphate + ATP = a 2'-deoxyribonucleoside 5'-triphosphate + ADP. It catalyses the reaction a ribonucleoside 5'-diphosphate + ATP = a ribonucleoside 5'-triphosphate + ADP. Its function is as follows. Major role in the synthesis of nucleoside triphosphates other than ATP. The ATP gamma phosphate is transferred to the NDP beta phosphate via a ping-pong mechanism, using a phosphorylated active-site intermediate. The polypeptide is Nucleoside diphosphate kinase (Methylorubrum populi (strain ATCC BAA-705 / NCIMB 13946 / BJ001) (Methylobacterium populi)).